A 382-amino-acid chain; its full sequence is Pyrimidine monooxygenase RutA (382 aa).

FMN is bound by residues 68–69 (IK), asparagine 134, glutamate 143, 159–160 (RY), and serine 209.

Belongs to the NtaA/SnaA/DszA monooxygenase family. RutA subfamily.

The enzyme catalyses uracil + FMNH2 + NADH + O2 = (Z)-3-ureidoacrylate + FMN + NAD(+) + H2O + H(+). The catalysed reaction is thymine + FMNH2 + NADH + O2 = (Z)-2-methylureidoacrylate + FMN + NAD(+) + H2O + H(+). Its function is as follows. Catalyzes the pyrimidine ring opening between N-3 and C-4 by an unusual flavin hydroperoxide-catalyzed mechanism, adding oxygen atoms in the process to yield ureidoacrylate peracid, that immediately reacts with FMN forming ureidoacrylate and FMN-N(5)-oxide. The FMN-N(5)-oxide reacts spontaneously with NADH to produce FMN. Requires the flavin reductase RutF to regenerate FMN in vivo. The sequence is that of Pyrimidine monooxygenase RutA from Escherichia coli (strain K12 / MC4100 / BW2952).